Consider the following 179-residue polypeptide: Large ribosomal subunit protein uL6 (179 aa).

It belongs to the universal ribosomal protein uL6 family. As to quaternary structure, part of the 50S ribosomal subunit.

This protein binds to the 23S rRNA, and is important in its secondary structure. It is located near the subunit interface in the base of the L7/L12 stalk, and near the tRNA binding site of the peptidyltransferase center. The polypeptide is Large ribosomal subunit protein uL6 (Bacillus velezensis (strain DSM 23117 / BGSC 10A6 / LMG 26770 / FZB42) (Bacillus amyloliquefaciens subsp. plantarum)).